Reading from the N-terminus, the 338-residue chain is mRNA decay activator protein ZFP36L1 (338 aa).

The segment at 1 to 111 (MTTTLVSATI…QKQPGSGQVN (111 aa)) is necessary and sufficient for the association with mRNA decay enzymes and mRNA decay activation. At serine 54 the chain carries Phosphoserine; by MAPKAPK2. Serine 90 carries the post-translational modification Phosphoserine; by PKB/AKT1. Position 92 is a phosphoserine; by PKB/AKT1 and MAPKAPK2 (serine 92). A disordered region spans residues 93–113 (EGGERLLPTQKQPGSGQVNSS). The span at 101–113 (TQKQPGSGQVNSS) shows a compositional bias: polar residues. 2 consecutive C3H1-type zinc fingers follow at residues 114–142 (RYKTELCRPFEENGACKYGDKCQFAHGIH) and 152–180 (KYKTELCRTFHTIGFCPYGPRCHFIHNAE). The segment at 185 to 338 (LAGGRDLSAD…IFSRLSISDD (154 aa)) is necessary for mRNA decay activation. Residue serine 203 is modified to Phosphoserine; by PKB/AKT1 and MAPKAPK2. The interval 273-338 (SPTTFLFRPM…IFSRLSISDD (66 aa)) is disordered. Low complexity predominate over residues 305-318 (YLSSSSSSHSGSDS). At serine 318 the chain carries Phosphoserine. Serine 334 carries the post-translational modification Phosphoserine; by RPS6KA1.

In terms of assembly, associates with the cytoplasmic CCR4-NOT deadenylase and RNA exosome complexes to trigger ARE-containing mRNA deadenylation and decay processes. Interacts with CNOT1. Interacts (via N-terminus) with CNOT6. Interacts with CNOT7; this interaction is inhibited in response to phorbol 12-myristate 13-acetate (PMA) treatment in a p38 MAPK-dependent manner. Interacts with DCP1A. Interacts (via N-terminus) with DCP2. Interacts (via N-terminus) with EXOSC2. Interacts with XRN1. Interacts (via phosphorylated form) with YWHAB; this interaction occurs in a protein kinase AKT1-dependent manner. Interacts (via phosphorylated form) with YWHAZ; this interaction occurs in a p38 MAPK- and AKT-signaling pathways. Post-translationally, phosphorylated. Phosphorylated by RPS6KA1 at Ser-334 upon phorbol 12-myristate 13-acetate (PMA) treatment; this phosphorylation results in dissociation of the CCR4-NOT deadenylase complex and induces p38 MAPK-mediated stabilization of the low-density lipoprotein receptor LDLR mRNA. Phosphorylated by protein kinase AKT1 at Ser-92 and Ser-203 in response to insulin; these phosphorylations stabilize ZFP36L1, increase the association with 14-3-3 proteins and mediate ARE-containing mRNA stabilization. AKT1-mediated phosphorylation at Ser-92 does not impair ARE-containing RNA-binding. Phosphorylated at Ser-54, Ser-92 and Ser-203 by MAPKAPK2; these phosphorylations increase the association with 14-3-3 proteins and mediate ARE-containing mRNA stabilization in a protein kinase AKT1-independent manner. MAPKAPK2-mediated phosphorylations at Ser-54, Ser-92 and Ser-203 do not impair ARE-containing RNA-binding. Phosphorylations increase the association with 14-3-3 proteins and mediate ARE-containing mRNA stabilization during early adipogenesis in a p38 MAPK- and AKT-dependent manner. Phosphorylated by protein kinase AKT1 at Ser-92. In terms of processing, ubiquitinated. Ubiquitination leads to proteasomal degradation, a process inhibited by phosphorylations at Ser-90, Ser-92 and Ser-203.

The protein resides in the nucleus. Its subcellular location is the cytoplasm. The protein localises to the cytoplasmic granule. It is found in the P-body. Its function is as follows. Zinc-finger RNA-binding protein that destabilizes several cytoplasmic AU-rich element (ARE)-containing mRNA transcripts by promoting their poly(A) tail removal or deadenylation, and hence provide a mechanism for attenuating protein synthesis. Acts as a 3'-untranslated region (UTR) ARE mRNA-binding adapter protein to communicate signaling events to the mRNA decay machinery. Functions by recruiting the CCR4-NOT deadenylase complex and components of the cytoplasmic RNA decay machinery to the bound ARE-containing mRNAs, and hence promotes ARE-mediated mRNA deadenylation and decay processes. Also induces the degradation of ARE-containing mRNAs even in absence of poly(A) tail. Binds to 3'-UTR ARE of numerous mRNAs. Positively regulates early adipogenesis by promoting ARE-mediated mRNA decay of immediate early genes (IEGs). Promotes ARE-mediated mRNA decay of mineralocorticoid receptor NR3C2 mRNA in response to hypertonic stress. Negatively regulates hematopoietic/erythroid cell differentiation by promoting ARE-mediated mRNA decay of the transcription factor STAT5B mRNA. Positively regulates monocyte/macrophage cell differentiation by promoting ARE-mediated mRNA decay of the cyclin-dependent kinase CDK6 mRNA. Promotes degradation of ARE-containing pluripotency-associated mRNAs in embryonic stem cells (ESCs), such as NANOG, through a fibroblast growth factor (FGF)-induced MAPK-dependent signaling pathway, and hence attenuates ESC self-renewal and positively regulates mesendoderm differentiation. May play a role in mediating pro-apoptotic effects in malignant B-cells by promoting ARE-mediated mRNA decay of BCL2 mRNA. In association with ZFP36L2 maintains quiescence on developing B lymphocytes by promoting ARE-mediated decay of several mRNAs encoding cell cycle regulators that help B cells progress through the cell cycle, and hence ensuring accurate variable-diversity-joining (VDJ) recombination and functional immune cell formation. Together with ZFP36L2 is also necessary for thymocyte development and prevention of T-cell acute lymphoblastic leukemia (T-ALL) transformation by promoting ARE-mediated mRNA decay of the oncogenic transcription factor NOTCH1 mRNA. Participates in the delivery of target ARE-mRNAs to processing bodies (PBs). In addition to its cytosolic mRNA-decay function, plays a role in the regulation of nuclear mRNA 3'-end processing; modulates mRNA 3'-end maturation efficiency of the DLL4 mRNA through binding with an ARE embedded in a weak noncanonical polyadenylation (poly(A)) signal in endothelial cells. Also involved in the regulation of stress granule (SG) and P-body (PB) formation and fusion. Plays a role in vasculogenesis and endocardial development. Plays a role in the regulation of keratinocyte proliferation, differentiation and apoptosis. Plays a role in myoblast cell differentiation. The polypeptide is mRNA decay activator protein ZFP36L1 (Rattus norvegicus (Rat)).